Reading from the N-terminus, the 95-residue chain is uncharacterized protein (95 aa).

The protein belongs to the asfivirus DP96R family.

This is an uncharacterized protein from African swine fever virus (isolate Warthog/Namibia/Wart80/1980) (ASFV).